A 336-amino-acid chain; its full sequence is Aldehyde reductase AdhA (336 aa).

Residues Cys-36, Cys-39, His-61, Cys-92, Cys-95, Cys-98, Cys-106, and Cys-148 each contribute to the Zn(2+) site.

This sequence belongs to the zinc-containing alcohol dehydrogenase family. Homotetramer. It depends on Zn(2+) as a cofactor.

It is found in the cytoplasm. The enzyme catalyses a primary alcohol + NADP(+) = an aldehyde + NADPH + H(+). Functionally, active on a wide variety of primary alcohols and their corresponding aldehydes, but not against ketones nor secondary alcohols. Active on aliphatic compounds up to 5 carbons in length and aromatic alcohols, less effective on branched-chain primary alcohols. Prefers NADPH to NADH. Its catalytic efficiency is greatest for aldehydes, suggesting the reduction of aromatic and medium-chain aliphatic aldehydes is its in vivo activity. Plays a role in tolerance to internally produced ethanol. This chain is Aldehyde reductase AdhA, found in Synechocystis sp. (strain ATCC 27184 / PCC 6803 / Kazusa).